Here is a 116-residue protein sequence, read N- to C-terminus: MTKLWTSLSALHSLAGPVVMLLYPLYASVIAIESPSKVDDEQWLAYWILYSFLTLSELILQSLLEWIPIWYTAKLVFVAWLVLPQFRGAAFIYNKVVREQFKKYGILKPKVEHQAE.

The next 3 membrane-spanning stretches (helical) occupy residues 12–32 (HSLAGPVVMLLYPLYASVIAI), 42–62 (QWLAYWILYSFLTLSELILQS), and 63–83 (LLEWIPIWYTAKLVFVAWLVL).

This sequence belongs to the DP1 family. As to expression, predominantly expressed in stem.

The protein resides in the membrane. The sequence is that of HVA22-like protein e (HVA22E) from Arabidopsis thaliana (Mouse-ear cress).